Consider the following 70-residue polypeptide: DNA-directed RNA polymerases I, II, and III subunit rpabc5 (70 aa).

Zn(2+) contacts are provided by cysteine 7, cysteine 10, cysteine 44, and cysteine 45.

Belongs to the archaeal Rpo10/eukaryotic RPB10 RNA polymerase subunit family. In terms of assembly, component of the RNA polymerase I (Pol I), RNA polymerase II (Pol II) and RNA polymerase III (Pol III) complexes.

The protein resides in the nucleus. Functionally, DNA-dependent RNA polymerase catalyzes the transcription of DNA into RNA using the four ribonucleoside triphosphates as substrates. Common component of RNA polymerases I, II and III which synthesize ribosomal RNA precursors, mRNA precursors and many functional non-coding RNAs, and a small RNAs, such as 5S rRNA and tRNAs, respectively. Pol II is the central component of the basal RNA polymerase II transcription machinery. Pols are composed of mobile elements that move relative to each other. In Pol II, RBP10 is part of the core element with the central large cleft. The chain is DNA-directed RNA polymerases I, II, and III subunit rpabc5 (polr2l) from Dictyostelium discoideum (Social amoeba).